The following is a 185-amino-acid chain: Large ribosomal subunit protein uL22 (185 aa).

Residues 157 to 185 (VAAPSPEEDAPKKKQSKKKMARQKLMQRD) form a disordered region. Residues 169–178 (KKQSKKKMAR) show a composition bias toward basic residues.

It belongs to the universal ribosomal protein uL22 family.

The chain is Large ribosomal subunit protein uL22 (RpL17) from Ixodes scapularis (Black-legged tick).